The chain runs to 142 residues: Protein spalt-accessory (142 aa).

An N-terminal signal peptide occupies residues 1–16 (MKLLIALFVLVNAVIA). Gly residues predominate over residues 65 to 77 (GQGGVSPGQGGFA). Positions 65–142 (GQGGVSPGQG…HHEHHGHHRH (78 aa)) are disordered. Residues 112-124 (NHHEYPEHHGDHH) show a composition bias toward basic and acidic residues. Residues 125–142 (REHHEHHGHHEHHGHHRH) are compositionally biased toward basic residues.

The protein localises to the secreted. In terms of biological role, likely to be involved in the establishment of the head. In Drosophila orena (Fruit fly), this protein is Protein spalt-accessory (sala).